A 363-amino-acid chain; its full sequence is Carbamoyl phosphate synthase small chain (363 aa).

2 CPSase regions span residues 1-168 and 1-172; these read MTKR…ASPG and MTKR…DGKR. Residues serine 46, glycine 220, and glycine 222 each coordinate L-glutamine. Residues 172 to 359 enclose the Glutamine amidotransferase type-1 domain; it reads RVVLVDYGVK…MEMMNVKEEG (188 aa). Cysteine 247 serves as the catalytic Nucleophile. 5 residues coordinate L-glutamine: leucine 248, glutamine 251, asparagine 289, glycine 291, and tyrosine 292. Active-site residues include histidine 332 and glutamate 334.

It belongs to the CarA family. As to quaternary structure, composed of two chains; the small (or glutamine) chain promotes the hydrolysis of glutamine to ammonia, which is used by the large (or ammonia) chain to synthesize carbamoyl phosphate. Tetramer of heterodimers (alpha,beta)4.

It catalyses the reaction hydrogencarbonate + L-glutamine + 2 ATP + H2O = carbamoyl phosphate + L-glutamate + 2 ADP + phosphate + 2 H(+). The catalysed reaction is L-glutamine + H2O = L-glutamate + NH4(+). It functions in the pathway amino-acid biosynthesis; L-arginine biosynthesis; carbamoyl phosphate from bicarbonate: step 1/1. Its pathway is pyrimidine metabolism; UMP biosynthesis via de novo pathway; (S)-dihydroorotate from bicarbonate: step 1/3. Its function is as follows. Small subunit of the glutamine-dependent carbamoyl phosphate synthetase (CPSase). CPSase catalyzes the formation of carbamoyl phosphate from the ammonia moiety of glutamine, carbonate, and phosphate donated by ATP, constituting the first step of 2 biosynthetic pathways, one leading to arginine and/or urea and the other to pyrimidine nucleotides. The small subunit (glutamine amidotransferase) binds and cleaves glutamine to supply the large subunit with the substrate ammonia. The chain is Carbamoyl phosphate synthase small chain from Listeria innocua serovar 6a (strain ATCC BAA-680 / CLIP 11262).